The primary structure comprises 66 residues: UPF0337 protein SAG0619 (66 aa).

Residues 1–22 (MSQEKLKSKLDQAKGGAKEGFG) form a disordered region.

It belongs to the UPF0337 (CsbD) family.

In Streptococcus agalactiae serotype V (strain ATCC BAA-611 / 2603 V/R), this protein is UPF0337 protein SAG0619.